The sequence spans 736 residues: Segment polarity protein dishevelled homolog DVL-2 (736 aa).

One can recognise a DIX domain in the interval 1 to 82 (MAETKVIYHL…RVVSWLASSE (82 aa)). The tract at residues 79–241 (ASSEGSQPDS…PRLERTSSFS (163 aa)) is disordered. The span at 100-114 (EPPPPVPPPIPPPPA) shows a compositional bias: pro residues. Residues 149–160 (MRRDRVRRRESS) show a composition bias toward basic and acidic residues. Over residues 181-195 (ESSSTLLTSEIETSI) the composition is skewed to low complexity. The segment covering 205–217 (SRFSSSTEQSSAS) has biased composition (polar residues). Basic residues predominate over residues 219-231 (LLKRHRRRRKQRP). The 73-residue stretch at 254 to 326 (TVTLNMEKYN…NDDAVRVLRD (73 aa)) folds into the PDZ domain. An interaction with custos region spans residues 327–427 (IVHKPGPIVL…LASVVKVMAS (101 aa)). The region spanning 428 to 502 (PESGLEVRDR…SEQCYYIFGD (75 aa)) is the DEP domain. Low complexity-rich tracts occupy residues 574 to 593 (MGSAGSQHSEGSRSSGSNRS) and 616 to 629 (KSGSGSESEYSTRS). Positions 574–664 (MGSAGSQHSE…HPPSVHSYAA (91 aa)) are disordered.

It belongs to the DSH family. Can form homomultimers. Interacts with prickle1. Interacts (via PDZ domain) with ccdc88c/dal and dact1-B/dpr. Interacts (via DIX domain) with ARP/Axin-related protein and dact1-A/frodo. Interacts with sdc4, possibly via fz7. Interacts directly (via DEP domain) with efnb1/ephrin-B1 and indirectly with the phosphorylated ephrin receptors ephb1 and ephb2, via association with SH domain-containing adapters. May interact with lrrc6. Interacts with custos (via NLS1 and NLS2); the interaction is negatively regulated by Wnt stimulation. In terms of processing, phosphorylated. Phosphorylation is controlled by frizzled proteins, correlates with the onset of embryo dorsalizing events and is higher in the dorsal half of early cleavage embryos. Phosphorylated on tyrosine residues in response to association with efnb1/ephrin-B1. Expressed equally in both animal-vegetal and dorsal-ventral directions of the early blastula. Becomes enriched on the dorsal side of the embryo after cortical rotation. Expressed along the anterior margin of eye field of neurulae (stage 16 embryos) and in the anterolateral crescent that borders the eye field. Continues to be expressed in the optic cup at stage 26. Expressed in the central nervous system throughout the early tailbud stage including the entire hindbrain.

Its subcellular location is the cytoplasm. It localises to the cytoplasmic vesicle. The protein resides in the cell projection. The protein localises to the cilium. It is found in the nucleus. Its subcellular location is the cell membrane. In terms of biological role, involved in at least 2 independent signaling cascades, controlling cell fate via canonical Wnt signaling and cell polarity via a planar cell polarity (PCP) cascade. Acts synergistically with dal/dapple-like to activate Wnt signaling, stabilizing ctnnb1/beta-catenin and leading to dorsal axis formation. Also prevents degradation of ctnnb1/beta-catenin by displacing gsk3 from a complex with ARP/Axin-related protein. Has an additional role in anterior-posterior (A/P) axis formation, specifying different neuroectodermal cell fates along the A/P axis in a dose-dependent manner by activating several early patterning genes. In the PCP pathway, required at the cell membrane for PCP-mediated neural and mesodermal convergent extension during gastrulation and subsequent neural tube closure, acting to activate jnk. Also involved in blastopore closure and archenteron elongation during early, but not late, gastrulation. Associates with ephrin receptors and ligands and acts as part of a downstream PCP pathway to mediate ephrin-mediated cell repulsion via activation of rhoa. Required for efnb1/ephrin-B1-driven movement of non-retinal progenitor cells into the retina during eye field formation. Patterns the hindbrain. Required for ciliogenesis. Controls the docking of basal bodies to the apical plasma membrane; mediates the activation, but not localization of rhoa at the apical surface of ciliated cells during basal body docking. Furthermore, required for the association of basal bodies with membrane-bound vesicles and the vesicle-trafficking protein exoc4/sec8, and this association is in turn required for basal body docking. Once basal bodies are docked, required for the planar polarization of basal bodies that underlies ciliary beating and the directional fluid flow across ciliated epithelia. The protein is Segment polarity protein dishevelled homolog DVL-2 (dvl2) of Xenopus laevis (African clawed frog).